Consider the following 268-residue polypeptide: MRLYRDWALVLRQHNLGEADRIVTLLTRDHGLVRAVAKGVRRTRSKFGARLEPFAYIDAQLHPGRNLDIVTQVVSIDAFATDIVSDYGRYTCGCAMLETAERLAGEERAPAPTLHRLTVSALRAVADGNRPRDLLLDAYLLRAMGIAGWAPALTACARCATPGPHRAFHIAAGGSVCVHCRPAGSTTPPRGVLELMSALHDGDWGTAQQAPQSHRSYASGLVAAHLQWHLERQLKTLPLVERTHQAYQVDRSIAERRAALVRQDMACG.

This sequence belongs to the RecO family.

In terms of biological role, involved in DNA repair and RecF pathway recombination. In Mycobacterium leprae (strain Br4923), this protein is DNA repair protein RecO.